A 126-amino-acid chain; its full sequence is Acidic phospholipase A2 S1E6-a (126 aa).

An N-terminal signal peptide occupies residues 1–3; sequence VEG. 7 cysteine pairs are disulfide-bonded: Cys29-Cys119, Cys31-Cys47, Cys46-Cys98, Cys52-Cys126, Cys53-Cys91, Cys60-Cys84, and Cys78-Cys89. Residues Tyr30, Gly32, and Gly34 each coordinate Ca(2+). His50 is an active-site residue. Asp51 is a binding site for Ca(2+). The active site involves Asp92.

In terms of assembly, homodimer. Requires Ca(2+) as cofactor. In terms of tissue distribution, expressed by the venom gland.

The protein resides in the secreted. It carries out the reaction a 1,2-diacyl-sn-glycero-3-phosphocholine + H2O = a 1-acyl-sn-glycero-3-phosphocholine + a fatty acid + H(+). In terms of biological role, snake venom phospholipase A2 (PLA2) that inhibits ADP-induced platelet aggregation. PLA2 catalyzes the calcium-dependent hydrolysis of the 2-acyl groups in 3-sn-phosphoglycerides. The chain is Acidic phospholipase A2 S1E6-a from Calloselasma rhodostoma (Malayan pit viper).